A 432-amino-acid chain; its full sequence is C2H2 type master regulator of conidiophore development brlA (432 aa).

Disordered regions lie at residues 22 to 72 and 238 to 260; these read SNEC…RTPG and KQHS…ADTP. The segment covering 29–44 has biased composition (low complexity); that stretch reads TSSFSPLESPTPTPTS. Polar residues-rich tracts occupy residues 62–72 and 238–252; these read LPNNTYERTPG and KQHS…CSLG. C2H2-type zinc fingers lie at residues 320 to 344 and 350 to 375; these read FKCK…MKSH and HVCW…TKTH. Residues 388–432 are disordered; that stretch reads LDENSPDYDPEFRGQLTPDGRPIYGSKLDDPIPGAGDMSLDGWDE.

It localises to the nucleus. Its function is as follows. BrlA, abaA and wetA are pivotal regulators of conidiophore development and conidium maturation. They act individually and together to regulate their own expression and that of numerous other sporulation-specific genes. Binds promoters of target genes at brlA response elements (BREs) containing the conserved sequence 5'-(C/A)(A/G)AGGG(G/A)-3'. Controls the expression of the conidiophore-specific phenol oxidase ivoB. Controls the expression of the hydrophobin rodA. Mediates the developmental switch from the indeterminate, apical growth pattern of vegetative cells to the budding growth pattern of conidiophores. Expression of brlA leads to activation of abaA, wetA and stuA, cessation of vegetative growth, cellular vacuolization and spore formation. This chain is C2H2 type master regulator of conidiophore development brlA, found in Emericella nidulans (strain FGSC A4 / ATCC 38163 / CBS 112.46 / NRRL 194 / M139) (Aspergillus nidulans).